Here is a 470-residue protein sequence, read N- to C-terminus: 24-hydroxycholesterol 7-alpha-hydroxylase (470 aa).

2 consecutive transmembrane segments (helical) span residues 3–23 (IMEL…LFLF) and 270–290 (VVLW…LGYI). C415 lines the heme pocket.

Belongs to the cytochrome P450 family. It depends on heme as a cofactor. In terms of tissue distribution, liver specific. Hepatic expression is sexually dimorphic (female &gt; male).

The protein localises to the endoplasmic reticulum membrane. It localises to the microsome membrane. It catalyses the reaction (24S)-hydroxycholesterol + reduced [NADPH--hemoprotein reductase] + O2 = (24S)-7alpha-dihydroxycholesterol + oxidized [NADPH--hemoprotein reductase] + H2O + H(+). It functions in the pathway steroid metabolism; cholesterol degradation. Its pathway is lipid metabolism; bile acid biosynthesis. In terms of biological role, a cytochrome P450 monooxygenase involved in neural cholesterol clearance through bile acid synthesis. Catalyzes 7-alpha hydroxylation of (24S)-hydroxycholesterol, a neural oxysterol that is metabolized to bile acids in the liver. Mechanistically, uses molecular oxygen inserting one oxygen atom into a substrate, and reducing the second into a water molecule, with two electrons provided by NADPH via cytochrome P450 reductase (CPR; NADPH-ferrihemoprotein reductase). This Mus musculus (Mouse) protein is 24-hydroxycholesterol 7-alpha-hydroxylase (Cyp39a1).